We begin with the raw amino-acid sequence, 365 residues long: MFEINPVNNCIQDLTERSDVLRGYLDYDAKKERLEEVNAELEQPDVWNEPERAQALGKERSSLEAVVDTLDQMKQGLEDVSGLLELAVEADDEETFNEAVAELDALEEKLAQLEFRRMFSGEYDSADCYLDIQAGSGGTEAQDWASMLERMYLRWAESRGFKTEIIEESEGEVAGIKSVTIKISGDYAYGWLRTETGVHRLVRKSPFDSGGRRHTSFSSAFVYPEVDDDIDIEINPADLRIDVYRASGAGGQHVNRTESAVRITHIPTGIVTQCQNDRSQHKNKDQAMKQMKAKLYELEMQKKNAEKQAMEDNKSDIGWGSQIRSYVLDDSRIKDLRTGVETRNTQAVLDGSLDQFIEASLKAGL.

Gln252 is subject to N5-methylglutamine.

This sequence belongs to the prokaryotic/mitochondrial release factor family. In terms of processing, methylated by PrmC. Methylation increases the termination efficiency of RF2.

The protein resides in the cytoplasm. Its function is as follows. Peptide chain release factor 2 directs the termination of translation in response to the peptide chain termination codons UGA and UAA. The sequence is that of Peptide chain release factor 2 from Escherichia coli O8 (strain IAI1).